A 277-amino-acid polypeptide reads, in one-letter code: Large ribosomal subunit protein uL2 (277 aa).

The tract at residues 219–277 (RPQTRGSAMNPVDHPHGGGEGKKNSGRHPVTPWGKPTKGAKTRRKKASDKLIISRRKGK) is disordered. Positions 231 to 241 (DHPHGGGEGKK) are enriched in basic and acidic residues. Over residues 256–277 (KGAKTRRKKASDKLIISRRKGK) the composition is skewed to basic residues.

This sequence belongs to the universal ribosomal protein uL2 family. In terms of assembly, part of the 50S ribosomal subunit. Forms a bridge to the 30S subunit in the 70S ribosome.

Functionally, one of the primary rRNA binding proteins. Required for association of the 30S and 50S subunits to form the 70S ribosome, for tRNA binding and peptide bond formation. It has been suggested to have peptidyltransferase activity; this is somewhat controversial. Makes several contacts with the 16S rRNA in the 70S ribosome. The polypeptide is Large ribosomal subunit protein uL2 (Campylobacter curvus (strain 525.92)).